A 306-amino-acid polypeptide reads, in one-letter code: tRNA dimethylallyltransferase 2 (306 aa).

19-26 contributes to the ATP binding site; sequence GATASGKT. 21 to 26 contributes to the substrate binding site; that stretch reads TASGKT. The tract at residues 44 to 47 is interaction with substrate tRNA; the sequence is DSRQ.

The protein belongs to the IPP transferase family. Monomer. It depends on Mg(2+) as a cofactor.

The enzyme catalyses adenosine(37) in tRNA + dimethylallyl diphosphate = N(6)-dimethylallyladenosine(37) in tRNA + diphosphate. Its function is as follows. Catalyzes the transfer of a dimethylallyl group onto the adenine at position 37 in tRNAs that read codons beginning with uridine, leading to the formation of N6-(dimethylallyl)adenosine (i(6)A). This is tRNA dimethylallyltransferase 2 from Citrifermentans bemidjiense (strain ATCC BAA-1014 / DSM 16622 / JCM 12645 / Bem) (Geobacter bemidjiensis).